A 1259-amino-acid polypeptide reads, in one-letter code: Protein retinal degeneration B (1259 aa).

The segment at 268 to 378 (GGGEECSDDS…SKGALHSPVG (111 aa)) is disordered. Phosphoserine is present on residues Ser274 and Ser277. Low complexity predominate over residues 284-293 (STAATAASTT). Acidic residues predominate over residues 318 to 335 (SSDEEGEEEEDDDEDEND). Residues 347–363 (QGGSAQRSRSQSIQMAQ) show a composition bias toward low complexity. Ser401, Ser403, and Ser434 each carry phosphoserine. Disordered regions lie at residues 427-454 (LLGE…GNSR), 472-500 (RGNK…STPS), and 660-692 (SQPG…NSRL). A compositionally biased stretch (low complexity) spans 663–678 (GTASGASNSGGDAATN). The span at 679-689 (INTHNPLSPRN) shows a compositional bias: polar residues. The DDHD domain occupies 730 to 913 (LDFEVCDFFM…IAFILRQIGK (184 aa)).

It belongs to the PtdIns transfer protein family. PI transfer class IIA subfamily. In terms of tissue distribution, expressed in adult heads, not detected in bodies.

It carries out the reaction a 1,2-diacyl-sn-glycero-3-phospho-(1D-myo-inositol)(in) = a 1,2-diacyl-sn-glycero-3-phospho-(1D-myo-inositol)(out). It catalyses the reaction a 1,2-diacyl-sn-glycero-3-phosphate(in) = a 1,2-diacyl-sn-glycero-3-phosphate(out). Functionally, catalyzes the transfer of phosphatidylinositol (PI) and phosphatidic acid (PA) between membranes. May control phosphatidylinositol concentration in transport vesicles from the subrhabdomeric cisternae (SRC) to the rhabdomere. May function as a calcium transporter. This chain is Protein retinal degeneration B (rdgB), found in Drosophila melanogaster (Fruit fly).